Reading from the N-terminus, the 297-residue chain is Glycerol-3-phosphate dehydrogenase [NAD(P)+] (297 aa).

Trp-11, Arg-30, and Lys-79 together coordinate NADPH. Sn-glycerol 3-phosphate-binding residues include Lys-79, Gly-107, and Ser-109. An NADPH-binding site is contributed by Ala-111. Sn-glycerol 3-phosphate is bound by residues Lys-161, Asp-214, Ser-224, Arg-225, and Asn-226. Lys-161 functions as the Proton acceptor in the catalytic mechanism. NADPH is bound at residue Arg-225. NADPH is bound by residues Val-249 and Glu-251.

This sequence belongs to the NAD-dependent glycerol-3-phosphate dehydrogenase family.

Its subcellular location is the cytoplasm. The catalysed reaction is sn-glycerol 3-phosphate + NAD(+) = dihydroxyacetone phosphate + NADH + H(+). It catalyses the reaction sn-glycerol 3-phosphate + NADP(+) = dihydroxyacetone phosphate + NADPH + H(+). It participates in membrane lipid metabolism; glycerophospholipid metabolism. In terms of biological role, catalyzes the reduction of the glycolytic intermediate dihydroxyacetone phosphate (DHAP) to sn-glycerol 3-phosphate (G3P), the key precursor for phospholipid synthesis. The polypeptide is Glycerol-3-phosphate dehydrogenase [NAD(P)+] (Wolinella succinogenes (strain ATCC 29543 / DSM 1740 / CCUG 13145 / JCM 31913 / LMG 7466 / NCTC 11488 / FDC 602W) (Vibrio succinogenes)).